The chain runs to 174 residues: Inosine/xanthosine triphosphatase (174 aa).

Aspartate 68 serves as a coordination point for Mg(2+). 68–69 (DA) is a binding site for substrate.

This sequence belongs to the YjjX NTPase family. In terms of assembly, homodimer. It depends on Mg(2+) as a cofactor. Mn(2+) is required as a cofactor.

It catalyses the reaction XTP + H2O = XDP + phosphate + H(+). The enzyme catalyses ITP + H2O = IDP + phosphate + H(+). Functionally, phosphatase that hydrolyzes non-canonical purine nucleotides such as XTP and ITP to their respective diphosphate derivatives. Probably excludes non-canonical purines from DNA/RNA precursor pool, thus preventing their incorporation into DNA/RNA and avoiding chromosomal lesions. This is Inosine/xanthosine triphosphatase from Photobacterium profundum (strain SS9).